The sequence spans 629 residues: tRNA uridine 5-carboxymethylaminomethyl modification enzyme MnmG (629 aa).

Residues 13–18 (GGGHAG), valine 125, and serine 180 contribute to the FAD site. 273–287 (GPRYCPSIEDKVMRF) contacts NAD(+). Residue glutamine 370 participates in FAD binding.

The protein belongs to the MnmG family. In terms of assembly, homodimer. Heterotetramer of two MnmE and two MnmG subunits. FAD serves as cofactor.

It localises to the cytoplasm. In terms of biological role, NAD-binding protein involved in the addition of a carboxymethylaminomethyl (cmnm) group at the wobble position (U34) of certain tRNAs, forming tRNA-cmnm(5)s(2)U34. The sequence is that of tRNA uridine 5-carboxymethylaminomethyl modification enzyme MnmG from Escherichia coli O139:H28 (strain E24377A / ETEC).